The primary structure comprises 351 residues: Auxin efflux carrier component 5 (351 aa).

10 helical membrane-spanning segments follow: residues 7–27 (VYKVIEAMVPLYVALILGYGS), 39–59 (CDAINRLVCYFTLPLFTIEFT), 71–91 (FIAADVLSKVIIVTVLALWAK), 100–120 (WSITSFSLCTLTNSLVVGVPL), 132–152 (LVVQSSVFQAIVWLTLLLFVL), 210–230 (ILGIAWAFISNRWHLELPGIL), 234–254 (ILIMSKAGTGTAMFNMGIFMA), 271–291 (MVLKFIAGPAAMAIGSIVLGL), 295–315 (VLRVAIIQAALPQSITSFIFA), and 329–349 (VIFGMLVSLPVLVAYYAALEF).

Belongs to the auxin efflux carrier (TC 2.A.69.1) family. Expressed in elongating parts of hypocotyl, cotyledon vasculature and guard cells. Detected in root pericycle and root tip and at later developmental stages in leaves, stems and flowers. Expressed in veins of mature leaves.

It localises to the endoplasmic reticulum membrane. The protein resides in the cell membrane. Its function is as follows. Auxin transporter regulating intracellular auxin homeostasis and metabolism. Mediates the auxin transport from the cytosol into the lumen of the endoplasmic reticulum. May also act as an auxin efflux carrier when located to the cell membrane. PIN5 and PIN8 may have an antagonistic/compensatory activity. Involved in unfolded protein response (UPR) activation. Involved in the control of vein patterning. Promotes vein formation. PIN5, PIN6, and PIN8 control vein network geometry, but they are expressed in mutually exclusive domains of leaf vascular cells. This Arabidopsis thaliana (Mouse-ear cress) protein is Auxin efflux carrier component 5.